The following is a 295-amino-acid chain: Protoheme IX farnesyltransferase 2 (295 aa).

Transmembrane regions (helical) follow at residues 9 to 29 (ITKP…FFLA), 36 to 56 (LAIF…GCVF), 85 to 105 (VALV…YYVA), 108 to 128 (LAAL…SLYL), 135 to 155 (GTLV…VAVS), 163 to 183 (LTLL…IAIF), 209 to 229 (ILLY…SGYA), 230 to 250 (GMSY…MAWT), and 263 to 283 (KLFV…SVDF).

The protein belongs to the UbiA prenyltransferase family. Protoheme IX farnesyltransferase subfamily.

Its subcellular location is the cell inner membrane. The enzyme catalyses heme b + (2E,6E)-farnesyl diphosphate + H2O = Fe(II)-heme o + diphosphate. It participates in porphyrin-containing compound metabolism; heme O biosynthesis; heme O from protoheme: step 1/1. In terms of biological role, converts heme B (protoheme IX) to heme O by substitution of the vinyl group on carbon 2 of heme B porphyrin ring with a hydroxyethyl farnesyl side group. The sequence is that of Protoheme IX farnesyltransferase 2 from Pseudomonas fluorescens (strain ATCC BAA-477 / NRRL B-23932 / Pf-5).